The chain runs to 273 residues: NADPH-dependent 7-cyano-7-deazaguanine reductase (273 aa).

Residue 80–82 (VES) participates in substrate binding. 82 to 83 (SK) is an NADPH binding site. Cysteine 180 serves as the catalytic Thioimide intermediate. The Proton donor role is filled by aspartate 187. 219–220 (HE) is a substrate binding site. 248–249 (RG) contributes to the NADPH binding site.

Belongs to the GTP cyclohydrolase I family. QueF type 2 subfamily. Homodimer.

The protein resides in the cytoplasm. It catalyses the reaction 7-aminomethyl-7-carbaguanine + 2 NADP(+) = 7-cyano-7-deazaguanine + 2 NADPH + 3 H(+). The protein operates within tRNA modification; tRNA-queuosine biosynthesis. In terms of biological role, catalyzes the NADPH-dependent reduction of 7-cyano-7-deazaguanine (preQ0) to 7-aminomethyl-7-deazaguanine (preQ1). In Bordetella bronchiseptica (strain ATCC BAA-588 / NCTC 13252 / RB50) (Alcaligenes bronchisepticus), this protein is NADPH-dependent 7-cyano-7-deazaguanine reductase.